Consider the following 188-residue polypeptide: dCTP deaminase (188 aa).

DCTP is bound by residues 111-116, 135-137, glutamine 156, tyrosine 170, and glutamine 180; these read KSTYAR and TLE. The Proton donor/acceptor role is filled by glutamate 137.

The protein belongs to the dCTP deaminase family. Homotrimer.

The catalysed reaction is dCTP + H2O + H(+) = dUTP + NH4(+). It functions in the pathway pyrimidine metabolism; dUMP biosynthesis; dUMP from dCTP (dUTP route): step 1/2. Its function is as follows. Catalyzes the deamination of dCTP to dUTP. The chain is dCTP deaminase from Marinobacter nauticus (strain ATCC 700491 / DSM 11845 / VT8) (Marinobacter aquaeolei).